The following is a 63-amino-acid chain: Protein D-63 (63 aa).

In terms of assembly, homodimer.

This protein may be involved in virus assembly. This is Protein D-63 from Saccharolobus solfataricus (Sulfolobus solfataricus).